A 171-amino-acid chain; its full sequence is Putative charged multivesicular body protein 4B-like protein CHMP4BP1 (171 aa).

Positions 1–17 (MLSKKQEFLEKKIEQRH) are enriched in basic and acidic residues. Disordered regions lie at residues 1-24 (MLSK…NKPA) and 132-171 (EQEE…KTTT).

Belongs to the SNF7 family.

The chain is Putative charged multivesicular body protein 4B-like protein CHMP4BP1 (CHMP4BP1) from Homo sapiens (Human).